The chain runs to 316 residues: IPDLASSRSTLPVLTKGPTGLLGPRGPYGPLQRFNIELSARGPAAVVGVLGKSFDSWLTKLGLPGPQGRPGPPGPGCRFALSNQCIKLAVEFAGQSKFSSFLANEGKKEGPEGEEGPRTEFDGAYFAGGKFPVVGKPFPQLKVFHAEPPFPTSRSTYGPSGSQPGKKGVVTPFKGNQPLKFNDFLVESDSRCPPDDSSFERSPAVSGHSSPATLNSRMKPAGFPGKGNGAPLKNGIASDPLENLKNRLGSCFPDVLDEPPTSPFFTGPSGYTSDGLNKTPTVSKTLTAAGDPGPGAGKVLESSKTDLVALQGEFQR.

Disordered stretches follow at residues 1-26 (IPDL…GPRG), 149-173 (PFPT…VTPF), 189-238 (DSRC…GIAS), and 259-278 (PPTS…GLNK). The segment covering 10–26 (TLPVLTKGPTGLLGPRG) has biased composition (low complexity). Polar residues-rich tracts occupy residues 152 to 163 (TSRSTYGPSGSQ), 207 to 216 (GHSSPATLNS), and 269 to 278 (SGYTSDGLNK).

Post-translationally, glycosylated; contains mainly glucose, galactose, galactosamine, glucosamine and glucuronic acid. Component of the acid-soluble organic matrix of nacreous shell layers (at protein level).

The protein localises to the secreted. Functionally, involved in nacre formation. Affects morphology of calcite crystals in vitro but does not inhibit their formation. Binds chitin. The protein is Nautilin-63 of Nautilus macromphalus (Bellybutton nautilus).